Here is a 684-residue protein sequence, read N- to C-terminus: 77 kDa membrane protein (684 aa).

Residues 1–30 (MKFKSLITTTLALGVLASTGANFNNNEASA) form the signal peptide. MAP repeat units follow at residues 45–154 (GYSK…EDKK), 156–265 (DKAN…ENKA), 266–374 (KRNY…KADR), 375–474 (YVPY…TGTK), 475–584 (AKAD…KKNN), and 586–684 (SNNV…ELKF).

It localises to the cell membrane. In terms of biological role, binds various plasma and ECM-proteins. The polypeptide is 77 kDa membrane protein (Staphylococcus aureus (strain COL)).